The primary structure comprises 269 residues: tRNA pseudouridine synthase A (269 aa).

Aspartate 55 serves as the catalytic Nucleophile. Residue tyrosine 111 coordinates substrate.

It belongs to the tRNA pseudouridine synthase TruA family.

It carries out the reaction uridine(38/39/40) in tRNA = pseudouridine(38/39/40) in tRNA. Formation of pseudouridine at positions 38, 39 and 40 in the anticodon stem and loop of transfer RNAs. The polypeptide is tRNA pseudouridine synthase A (Methanosarcina acetivorans (strain ATCC 35395 / DSM 2834 / JCM 12185 / C2A)).